A 315-amino-acid chain; its full sequence is Porphobilinogen deaminase (315 aa).

The residue at position 245 (cysteine 245) is an S-(dipyrrolylmethanemethyl)cysteine.

This sequence belongs to the HMBS family. In terms of assembly, monomer. Requires dipyrromethane as cofactor.

It catalyses the reaction 4 porphobilinogen + H2O = hydroxymethylbilane + 4 NH4(+). It functions in the pathway porphyrin-containing compound metabolism; protoporphyrin-IX biosynthesis; coproporphyrinogen-III from 5-aminolevulinate: step 2/4. Its pathway is porphyrin-containing compound metabolism; chlorophyll biosynthesis. Tetrapolymerization of the monopyrrole PBG into the hydroxymethylbilane pre-uroporphyrinogen in several discrete steps. In Prochlorococcus marinus (strain NATL1A), this protein is Porphobilinogen deaminase.